A 91-amino-acid polypeptide reads, in one-letter code: MIKNLFIPFISQKKKEEENPGSVEFQVVNFTNKIRKLTSHFKLHPKDYLSQRGLRKILGKRQGLLSYLLERDKRRFEKLMSELNTRDSQIR.

The protein belongs to the universal ribosomal protein uS15 family. Part of the 30S ribosomal subunit.

It is found in the plastid. Its subcellular location is the chloroplast. This Cicer arietinum (Chickpea) protein is Small ribosomal subunit protein uS15c (rps15).